Here is a 359-residue protein sequence, read N- to C-terminus: Phosphate acyltransferase (359 aa).

It belongs to the PlsX family. Homodimer. Probably interacts with PlsY.

It localises to the cytoplasm. It carries out the reaction a fatty acyl-[ACP] + phosphate = an acyl phosphate + holo-[ACP]. It functions in the pathway lipid metabolism; phospholipid metabolism. Its function is as follows. Catalyzes the reversible formation of acyl-phosphate (acyl-PO(4)) from acyl-[acyl-carrier-protein] (acyl-ACP). This enzyme utilizes acyl-ACP as fatty acyl donor, but not acyl-CoA. The protein is Phosphate acyltransferase of Salmonella agona (strain SL483).